The sequence spans 122 residues: UPF0102 protein CE1920 (122 aa).

The protein belongs to the UPF0102 family.

This is UPF0102 protein CE1920 from Corynebacterium efficiens (strain DSM 44549 / YS-314 / AJ 12310 / JCM 11189 / NBRC 100395).